The sequence spans 402 residues: MQFDRLLTEARLATMVAGDDGYGVIEKAALGIKDGRIAWIGPMSEIPGEARETERLASRWVTPALIDCHTHLVFAGDRSDEFERRLGGESYESISRSGGGIARSVEATRAAGAAELAAGALTRIDALAQEGVGTVEIKSGYGLTRESERTMLRAARGVERASGMRVSATLLAAHAVPPEYKGESGRYIDEICIPLIREAAREGLADAVDAYCEGIGFSPEETRRLFIAAKAAGLPVKLHADQLSDTGGARLVAEFGGLSADHIEYTNAEGIAAMAKAGTVGVLLPGAFYALNETKKPPVEAMRAAGVDMAVATDANPGTSPLVSLLTAANMACILFGLTLPEAFAGMTRNAARALGLHGEIGTLEVGKAADLAIWDVERPAEIIQWIGRRPLHGRILAGEWQ.

Residues His69 and His71 each contribute to the Fe(3+) site. His69 and His71 together coordinate Zn(2+). 4-imidazolone-5-propanoate contacts are provided by Arg78, Tyr141, and His174. Tyr141 is an N-formimidoyl-L-glutamate binding site. Fe(3+) is bound at residue His239. His239 is a Zn(2+) binding site. A 4-imidazolone-5-propanoate-binding site is contributed by Gln242. A Fe(3+)-binding site is contributed by Asp314. Asp314 is a binding site for Zn(2+). Positions 316 and 318 each coordinate N-formimidoyl-L-glutamate. Residue Thr319 coordinates 4-imidazolone-5-propanoate.

It belongs to the metallo-dependent hydrolases superfamily. HutI family. Zn(2+) serves as cofactor. It depends on Fe(3+) as a cofactor.

The protein resides in the cytoplasm. It carries out the reaction 4-imidazolone-5-propanoate + H2O = N-formimidoyl-L-glutamate. It functions in the pathway amino-acid degradation; L-histidine degradation into L-glutamate; N-formimidoyl-L-glutamate from L-histidine: step 3/3. In terms of biological role, catalyzes the hydrolytic cleavage of the carbon-nitrogen bond in imidazolone-5-propanoate to yield N-formimidoyl-L-glutamate. It is the third step in the universal histidine degradation pathway. This Maricaulis maris (strain MCS10) (Caulobacter maris) protein is Imidazolonepropionase.